Consider the following 319-residue polypeptide: Quinolinate synthase (319 aa).

Iminosuccinate-binding residues include histidine 34 and serine 51. Cysteine 96 contacts [4Fe-4S] cluster. Residues 122-124 (YIN) and serine 139 each bind iminosuccinate. Cysteine 182 contacts [4Fe-4S] cluster. Iminosuccinate contacts are provided by residues 208-210 (HPE) and threonine 225. Cysteine 276 serves as a coordination point for [4Fe-4S] cluster.

It belongs to the quinolinate synthase family. Type 2 subfamily. [4Fe-4S] cluster serves as cofactor.

It localises to the cytoplasm. It carries out the reaction iminosuccinate + dihydroxyacetone phosphate = quinolinate + phosphate + 2 H2O + H(+). It participates in cofactor biosynthesis; NAD(+) biosynthesis; quinolinate from iminoaspartate: step 1/1. Its function is as follows. Catalyzes the condensation of iminoaspartate with dihydroxyacetone phosphate to form quinolinate. The protein is Quinolinate synthase of Thermosynechococcus vestitus (strain NIES-2133 / IAM M-273 / BP-1).